The sequence spans 144 residues: HTH-type transcriptional regulator LrpC (144 aa).

The HTH asnC-type domain occupies 3 to 64 (LDQIDLNIIE…EVDQKKLGLP (62 aa)). Residues 22–41 (MRELGRKIKLSPPSVTERVR) constitute a DNA-binding region (H-T-H motif).

In terms of biological role, transcriptional regulator with a possible role in regulation of amino acid metabolism. Plays a role in the growth phase transition. The protein is HTH-type transcriptional regulator LrpC (lrpC) of Bacillus subtilis (strain 168).